Consider the following 1391-residue polypeptide: DNA-directed RNA polymerase subunit beta'' (1391 aa).

Residues Cys220, Cys291, Cys298, and Cys301 each coordinate Zn(2+).

The protein belongs to the RNA polymerase beta' chain family. RpoC2 subfamily. As to quaternary structure, in plastids the minimal PEP RNA polymerase catalytic core is composed of four subunits: alpha, beta, beta', and beta''. When a (nuclear-encoded) sigma factor is associated with the core the holoenzyme is formed, which can initiate transcription. It depends on Zn(2+) as a cofactor.

The protein resides in the plastid. It is found in the chloroplast. It catalyses the reaction RNA(n) + a ribonucleoside 5'-triphosphate = RNA(n+1) + diphosphate. Functionally, DNA-dependent RNA polymerase catalyzes the transcription of DNA into RNA using the four ribonucleoside triphosphates as substrates. This chain is DNA-directed RNA polymerase subunit beta'', found in Gossypium barbadense (Sea Island cotton).